The primary structure comprises 922 residues: Phosphoenolpyruvate carboxylase (922 aa).

The segment at 1–20 (MTKTLHARPSAATDTTFAPP) is disordered. Active-site residues include histidine 142 and lysine 581.

This sequence belongs to the PEPCase type 1 family. It depends on Mg(2+) as a cofactor.

It carries out the reaction oxaloacetate + phosphate = phosphoenolpyruvate + hydrogencarbonate. Functionally, forms oxaloacetate, a four-carbon dicarboxylic acid source for the tricarboxylic acid cycle. In Methylorubrum extorquens (strain ATCC 14718 / DSM 1338 / JCM 2805 / NCIMB 9133 / AM1) (Methylobacterium extorquens), this protein is Phosphoenolpyruvate carboxylase (ppc).